The primary structure comprises 375 residues: Nucleolysin TIAR (375 aa).

RRM domains lie at arginine 9–threonine 85 and phenylalanine 97–arginine 175. N6-acetyllysine is present on lysine 122. Position 201 is a phosphoserine (serine 201). The RRM 3 domain occupies cysteine 205–glutamate 277. The segment at phenylalanine 345–glutamine 375 is disordered. Residues glycine 352–asparagine 363 show a composition bias toward pro residues.

Interacts with FASTK. Phosphorylated by MAPK14 following DNA damage, releasing TIAR from GADD45A mRNA. In terms of tissue distribution, expressed in brain, heart, kidney, lung and skeletal muscle.

The protein localises to the nucleus. The protein resides in the cytoplasm. It is found in the cytolytic granule. It localises to the stress granule. Functionally, RNA-binding protein involved in alternative pre-RNA splicing and in cytoplasmic stress granules formation. Shows a preference for uridine-rich RNAs. Activates splicing of alternative exons with weak 5' splice sites followed by a U-rich stretch on its own pre-mRNA and on TIA1 mRNA. Promotes the inclusion of TIA1 exon 5 to give rise to the long isoform (isoform a) of TIA1. Acts downstream of the stress-induced phosphorylation of EIF2S1/EIF2A to promote the recruitment of untranslated mRNAs to cytoplasmic stress granules (SG). Possesses nucleolytic activity against cytotoxic lymphocyte target cells. May be involved in apoptosis. This chain is Nucleolysin TIAR (TIAL1), found in Homo sapiens (Human).